The chain runs to 366 residues: Alanine racemase (366 aa).

The active-site Proton acceptor; specific for D-alanine is Lys40. An N6-(pyridoxal phosphate)lysine modification is found at Lys40. Position 136 (Arg136) interacts with substrate. Tyr263 (proton acceptor; specific for L-alanine) is an active-site residue. Met310 contributes to the substrate binding site.

The protein belongs to the alanine racemase family. It depends on pyridoxal 5'-phosphate as a cofactor.

The enzyme catalyses L-alanine = D-alanine. The protein operates within amino-acid biosynthesis; D-alanine biosynthesis; D-alanine from L-alanine: step 1/1. Its function is as follows. Catalyzes the interconversion of L-alanine and D-alanine. May also act on other amino acids. The sequence is that of Alanine racemase (alr) from Streptococcus agalactiae serotype Ia (strain ATCC 27591 / A909 / CDC SS700).